A 178-amino-acid chain; its full sequence is MVVAAAIREEIEIPEGVEVIINNNEVTVKGPNGEDSRKFTYPNVDITEVENNVVLETSFPRKKDKAMIGTTKAHISNMITGVTDGFEYHMKIVFAHFPMTVKVNKDVVVIDNFLGERHPRTAKVVGSAKVVVKGDEVTITGINKEHVGQTMANLEQATKIKGRDPRVFQDGIYLISKE.

This sequence belongs to the universal ribosomal protein uL6 family. Part of the 50S ribosomal subunit.

Functionally, this protein binds to the 23S rRNA, and is important in its secondary structure. It is located near the subunit interface in the base of the L7/L12 stalk, and near the tRNA binding site of the peptidyltransferase center. This Methanobrevibacter smithii (strain ATCC 35061 / DSM 861 / OCM 144 / PS) protein is Large ribosomal subunit protein uL6.